We begin with the raw amino-acid sequence, 176 residues long: Interleukin-7 (176 aa).

The N-terminal stretch at 1–25 (MFHVSFRYIFGIPPLILVLLPVASS) is a signal peptide. Cystine bridges form between Cys-27-Cys-165, Cys-58-Cys-153, and Cys-71-Cys-116. 3 N-linked (GlcNAc...) asparagine glycosylation sites follow: Asn-94, Asn-115, and Asn-140. The interval 118–143 (SKGKGRKPPSLSEAQPTKNLEENKSS) is disordered.

This sequence belongs to the IL-7/IL-9 family. In terms of assembly, interacts with IL7R and CSF2RG.

The protein localises to the secreted. In terms of biological role, hematopoietic cytokine that plays an essential role in the development, expansion, and survival of naive and memory T-cells and B-cells thereby regulating the number of mature lymphocytes and maintaining lymphoid homeostasis. Mechanistically, exerts its biological effects through a receptor composed of IL7RA subunit and the cytokine receptor common subunit gamma/CSF2RG. Binding to the receptor leads to activation of various kinases including JAK1 or JAK3 depending on the cell type and subsequently propagation of signals through activation of several downstream signaling pathways including the PI3K/Akt/mTOR or the JAK-STAT5. This chain is Interleukin-7 (IL7), found in Bos taurus (Bovine).